Reading from the N-terminus, the 185-residue chain is uncharacterized protein (185 aa).

The N-terminal stretch at 1 to 24 is a signal peptide; sequence MPCNRAVFGAFVLALLISLQSVYF. The chain crosses the membrane as a helical span at residues 50–70; that stretch reads VAVNVIVEFSFDILFFLCGLL. Residues 96-113 show a composition bias toward basic and acidic residues; that stretch reads ELEHVSSRRRNDSRDDST. Positions 96–185 are disordered; the sequence is ELEHVSSRRR…LFTAGGIGLP (90 aa). The segment covering 114–126 has biased composition (polar residues); sequence VRNVSKTSPLASQ. Over residues 127-138 the composition is skewed to basic and acidic residues; that stretch reads RSRDHFDGDPRE. The segment covering 139–155 has biased composition (pro residues); sequence PAPPAYSPADFYPPPAS.

Its subcellular location is the host membrane. This is an uncharacterized protein from Colorado tick fever virus (strain USA/Florio N-7180) (CTFV).